Reading from the N-terminus, the 20-residue chain is Luminal-binding protein (20 aa).

It belongs to the heat shock protein 70 family.

The protein localises to the endoplasmic reticulum lumen. Probably plays a role in facilitating the assembly of multimeric protein complexes inside the ER. The sequence is that of Luminal-binding protein from Phaseolus vulgaris (Kidney bean).